A 349-amino-acid polypeptide reads, in one-letter code: Glycerol-1-phosphate dehydrogenase [NAD(P)+] (349 aa).

NAD(+)-binding positions include 95–99 (GKSID) and 117–120 (TSPS). Residue Asp-122 coordinates substrate. An NAD(+)-binding site is contributed by Ser-126. Asp-169 serves as a coordination point for substrate. Residues Asp-169 and His-249 each contribute to the Zn(2+) site. His-253 contacts substrate. His-265 lines the Zn(2+) pocket.

This sequence belongs to the glycerol-1-phosphate dehydrogenase family. In terms of assembly, homodimer. It depends on Zn(2+) as a cofactor.

The protein resides in the cytoplasm. It carries out the reaction sn-glycerol 1-phosphate + NAD(+) = dihydroxyacetone phosphate + NADH + H(+). The catalysed reaction is sn-glycerol 1-phosphate + NADP(+) = dihydroxyacetone phosphate + NADPH + H(+). It functions in the pathway membrane lipid metabolism; glycerophospholipid metabolism. Functionally, catalyzes the NAD(P)H-dependent reduction of dihydroxyacetonephosphate (DHAP or glycerone phosphate) to glycerol 1-phosphate (G1P). The G1P thus generated is used as the glycerophosphate backbone of phospholipids in the cellular membranes of Archaea. This Hyperthermus butylicus (strain DSM 5456 / JCM 9403 / PLM1-5) protein is Glycerol-1-phosphate dehydrogenase [NAD(P)+].